A 211-amino-acid chain; its full sequence is Ribosomal RNA small subunit methyltransferase G (211 aa).

S-adenosyl-L-methionine is bound by residues Gly73, 126-127 (IE), and Arg142.

This sequence belongs to the methyltransferase superfamily. RNA methyltransferase RsmG family.

It localises to the cytoplasm. The catalysed reaction is guanosine(527) in 16S rRNA + S-adenosyl-L-methionine = N(7)-methylguanosine(527) in 16S rRNA + S-adenosyl-L-homocysteine. Its function is as follows. Specifically methylates the N7 position of guanine in position 527 of 16S rRNA. The chain is Ribosomal RNA small subunit methyltransferase G from Methylorubrum populi (strain ATCC BAA-705 / NCIMB 13946 / BJ001) (Methylobacterium populi).